The following is a 317-amino-acid chain: MAKDGFELYRYTPELGASILFTVLFAVSGVAFVILLFHYSVKSKRRVGSLMKSQPVLRYYGTVNLAGAYIPFIFGCFVECVGFAFRCKSSKDTTLLNPYIIQTVFLLVSPTLYAASIYMIFGRMATLLFAENLMIMPARFNTTIFVIGDVGSLLLQAIGGAMMSKVTSASSGSHLVTAGLFIQIAFFGLFIINEVLFIFKMSKKPTNVSVRYGSWKYLNIALLVNSFLILIRSIVRAVEFIQGYDGEIASHEWYLYIFDGLPMFLLVLIFIVAFPLINIFRIHEESIQAQQSARFDGTDYPDVEVTSIEEDLASKSE.

At 1–16 (MAKDGFELYRYTPELG) the chain is on the extracellular side. The chain crosses the membrane as a helical span at residues 17–37 (ASILFTVLFAVSGVAFVILLF). The Cytoplasmic segment spans residues 38-64 (HYSVKSKRRVGSLMKSQPVLRYYGTVN). Residues 65–85 (LAGAYIPFIFGCFVECVGFAF) traverse the membrane as a helical segment. Residues 86–99 (RCKSSKDTTLLNPY) are Extracellular-facing. A helical membrane pass occupies residues 100–120 (IIQTVFLLVSPTLYAASIYMI). Topologically, residues 121-142 (FGRMATLLFAENLMIMPARFNT) are cytoplasmic. The chain crosses the membrane as a helical span at residues 143–163 (TIFVIGDVGSLLLQAIGGAMM). The Extracellular portion of the chain corresponds to 164 to 178 (SKVTSASSGSHLVTA). The chain crosses the membrane as a helical span at residues 179 to 199 (GLFIQIAFFGLFIINEVLFIF). Over 200–214 (KMSKKPTNVSVRYGS) the chain is Cytoplasmic. A helical membrane pass occupies residues 215 to 235 (WKYLNIALLVNSFLILIRSIV). The Extracellular segment spans residues 236 to 259 (RAVEFIQGYDGEIASHEWYLYIFD). A helical membrane pass occupies residues 260-280 (GLPMFLLVLIFIVAFPLINIF). At 281 to 317 (RIHEESIQAQQSARFDGTDYPDVEVTSIEEDLASKSE) the chain is on the cytoplasmic side.

This sequence belongs to the lipid-translocating exporter (LTE) (TC 9.A.26.1) family.

The protein resides in the membrane. Functionally, involved in 7-aminocholesterol resistance. In Saccharomyces cerevisiae (strain ATCC 204508 / S288c) (Baker's yeast), this protein is Protein RTA1 (RTA1).